The following is a 226-amino-acid chain: 3-dehydroquinate dehydratase (226 aa).

3-dehydroquinate contacts are provided by residues 29 to 31 (EFR) and Arg56. His120 (proton donor/acceptor) is an active-site residue. The active-site Schiff-base intermediate with substrate is the Lys146. 3 residues coordinate 3-dehydroquinate: Arg187, Thr208, and Gln212.

This sequence belongs to the type-I 3-dehydroquinase family. Homodimer.

The catalysed reaction is 3-dehydroquinate = 3-dehydroshikimate + H2O. Its pathway is metabolic intermediate biosynthesis; chorismate biosynthesis; chorismate from D-erythrose 4-phosphate and phosphoenolpyruvate: step 3/7. Involved in the third step of the chorismate pathway, which leads to the biosynthesis of aromatic amino acids. Catalyzes the cis-dehydration of 3-dehydroquinate (DHQ) and introduces the first double bond of the aromatic ring to yield 3-dehydroshikimate. In Halobacterium salinarum (strain ATCC 700922 / JCM 11081 / NRC-1) (Halobacterium halobium), this protein is 3-dehydroquinate dehydratase.